The primary structure comprises 481 residues: Eukaryotic translation initiation factor 3 subunit L (481 aa).

A disordered region spans residues 1–22 (MSVDARTAYPGSRPPANMQDES). Residues 262–457 (DAIRTFSHIL…DLDYAIEGNL (196 aa)) form the PCI domain.

The protein belongs to the eIF-3 subunit L family. As to quaternary structure, component of the eukaryotic translation initiation factor 3 (eIF-3) complex.

Its subcellular location is the cytoplasm. Component of the eukaryotic translation initiation factor 3 (eIF-3) complex, which is involved in protein synthesis of a specialized repertoire of mRNAs and, together with other initiation factors, stimulates binding of mRNA and methionyl-tRNAi to the 40S ribosome. The eIF-3 complex specifically targets and initiates translation of a subset of mRNAs involved in cell proliferation. This Coccidioides immitis (strain RS) (Valley fever fungus) protein is Eukaryotic translation initiation factor 3 subunit L.